Reading from the N-terminus, the 644-residue chain is Protein cueball (644 aa).

A signal peptide spans 1 to 26 (MIRIRFGMDVLLVLLLATCLLSPTHG). Residues 27–531 (TPLEWDFAVT…VCLTPTVWTS (505 aa)) lie on the Extracellular side of the membrane. N-linked (GlcNAc...) asparagine glycans are attached at residues Asn82 and Asn108. LDL-receptor class B repeat units follow at residues 121–166 (TNLF…DVCR), 167–211 (RKLY…DQLS), and 212–257 (DRLF…TNDA). Asn175 and Asn190 each carry an N-linked (GlcNAc...) asparagine glycan. The N-linked (GlcNAc...) asparagine glycan is linked to Asn313. 2 EGF-like domains span residues 398 to 430 (EIRE…FTGE) and 433 to 471 (EVSV…ARCE). 5 disulfide bridges follow: Cys402-Cys411, Cys406-Cys421, Cys437-Cys447, Cys441-Cys459, and Cys461-Cys470. Residues Asn473 and Asn508 are each glycosylated (N-linked (GlcNAc...) asparagine). Residues 532–552 (SVIIILVVGIVSSLLLVAVIV) form a helical membrane-spanning segment. At 553–644 (HGIRRLYKPK…LIHNMEDDLY (92 aa)) the chain is on the cytoplasmic side.

Belongs to the cueball family.

Its subcellular location is the cell membrane. Its function is as follows. Has a role in spermatogenesis and oogenesis. The polypeptide is Protein cueball (Drosophila yakuba (Fruit fly)).